The primary structure comprises 346 residues: tRNA N6-adenosine threonylcarbamoyltransferase (346 aa).

His-111 and His-115 together coordinate Fe cation. Residues 134–138 (LVSGG), Asp-167, Gly-180, Asp-184, and Asn-280 contribute to the substrate site. Asp-308 serves as a coordination point for Fe cation.

It belongs to the KAE1 / TsaD family. Fe(2+) serves as cofactor.

Its subcellular location is the cytoplasm. The catalysed reaction is L-threonylcarbamoyladenylate + adenosine(37) in tRNA = N(6)-L-threonylcarbamoyladenosine(37) in tRNA + AMP + H(+). Functionally, required for the formation of a threonylcarbamoyl group on adenosine at position 37 (t(6)A37) in tRNAs that read codons beginning with adenine. Is involved in the transfer of the threonylcarbamoyl moiety of threonylcarbamoyl-AMP (TC-AMP) to the N6 group of A37, together with TsaE and TsaB. TsaD likely plays a direct catalytic role in this reaction. The polypeptide is tRNA N6-adenosine threonylcarbamoyltransferase (Crocosphaera subtropica (strain ATCC 51142 / BH68) (Cyanothece sp. (strain ATCC 51142))).